The following is a 63-amino-acid chain: Small ribosomal subunit protein bS21 (63 aa).

The protein belongs to the bacterial ribosomal protein bS21 family.

This chain is Small ribosomal subunit protein bS21, found in Syntrophus aciditrophicus (strain SB).